A 597-amino-acid polypeptide reads, in one-letter code: Dictomallein-3 (597 aa).

An N-terminal signal peptide occupies residues 1–19; the sequence is MKLILILIFLFSCILFINC. Positions 148–409 constitute a Peptidase M66 domain; the sequence is PDVGQDYTLK…QNYFKNSIYY (262 aa). Position 301 (His301) interacts with Zn(2+). Residue Glu302 is part of the active site. The Zn(2+) site is built by His305 and His311.

The protein belongs to the dictomallein family. It depends on Zn(2+) as a cofactor.

It is found in the secreted. The polypeptide is Dictomallein-3 (dtmlC) (Dictyostelium discoideum (Social amoeba)).